A 315-amino-acid chain; its full sequence is Methionyl-tRNA formyltransferase (315 aa).

113–116 serves as a coordination point for (6S)-5,6,7,8-tetrahydrofolate; it reads SLLP.

The protein belongs to the Fmt family.

The enzyme catalyses L-methionyl-tRNA(fMet) + (6R)-10-formyltetrahydrofolate = N-formyl-L-methionyl-tRNA(fMet) + (6S)-5,6,7,8-tetrahydrofolate + H(+). In terms of biological role, attaches a formyl group to the free amino group of methionyl-tRNA(fMet). The formyl group appears to play a dual role in the initiator identity of N-formylmethionyl-tRNA by promoting its recognition by IF2 and preventing the misappropriation of this tRNA by the elongation apparatus. This Escherichia coli O6:K15:H31 (strain 536 / UPEC) protein is Methionyl-tRNA formyltransferase.